The primary structure comprises 64 residues: Large ribosomal subunit protein bL35 (64 aa).

The tract at residues 27 to 47 is disordered; it reads MNGSHNLEKKNRKRSRRLHQA. Residues 36 to 45 are compositionally biased toward basic residues; sequence KNRKRSRRLH.

It belongs to the bacterial ribosomal protein bL35 family.

The protein is Large ribosomal subunit protein bL35 of Chlorobium phaeobacteroides (strain DSM 266 / SMG 266 / 2430).